A 355-amino-acid chain; its full sequence is Alkanal monooxygenase alpha chain (355 aa).

The protein belongs to the bacterial luciferase oxidoreductase family. As to quaternary structure, heterodimer of an alpha and a beta chain.

It catalyses the reaction a long-chain fatty aldehyde + FMNH2 + O2 = a long-chain fatty acid + hnu + FMN + H2O + 2 H(+). Its function is as follows. Light-emitting reaction in luminous bacteria. The protein is Alkanal monooxygenase alpha chain (luxA) of Vibrio harveyi (Beneckea harveyi).